Here is a 126-residue protein sequence, read N- to C-terminus: Small nuclear ribonucleoprotein Sm D3 (126 aa).

S2 is modified (N-acetylserine). Residues 5 to 77 form the Sm domain; that stretch reads VPIKVLHEAE…IRFLILPDML (73 aa). A run of 5 repeats spans residues 110–111, 112–113, 114–115, 116–117, and 118–119. Positions 110–119 are 5 X 2 AA tandem repeats of [RM]-G; required for interaction with SMN1; the sequence is RGRGRGMGRG.

The protein belongs to the snRNP core protein family. In terms of assembly, core component of the spliceosomal U1, U2, U4 and U5 small nuclear ribonucleoproteins (snRNPs), the building blocks of the spliceosome. Most spliceosomal snRNPs contain a common set of Sm proteins, SNRPB, SNRPD1, SNRPD2, SNRPD3, SNRPE, SNRPF and SNRPG that assemble in a heptameric protein ring on the Sm site of the small nuclear RNA to form the core snRNP. Component of the U1 snRNP. The U1 snRNP is composed of the U1 snRNA and the 7 core Sm proteins SNRPB, SNRPD1, SNRPD2, SNRPD3, SNRPE, SNRPF and SNRPG, and at least three U1 snRNP-specific proteins SNRNP70/U1-70K, SNRPA/U1-A and SNRPC/U1-C. Component of the U4/U6-U5 tri-snRNP complex composed of the U4, U6 and U5 snRNAs and at least PRPF3, PRPF4, PRPF6, PRPF8, PRPF31, SNRNP200, TXNL4A, SNRNP40, SNRPB, SNRPD1, SNRPD2, SNRPD3, SNRPE, SNRPF, SNRPG, DDX23, CD2BP2, PPIH, SNU13, EFTUD2, SART1 and USP39, plus LSM2, LSM3, LSM4, LSM5, LSM6, LSM7 and LSM8. Component of the U7 snRNP complex, or U7 Sm protein core complex, that is composed of the U7 snRNA and at least LSM10, LSM11, SNRPB, SNRPD3, SNRPE, SNRPF and SNRPG; the complex does not contain SNRPD1 and SNRPD2. Component of the minor spliceosome, which splices U12-type introns. Part of the SMN-Sm complex that contains SMN1, GEMIN2/SIP1, DDX20/GEMIN3, GEMIN4, GEMIN5, GEMIN6, GEMIN7, GEMIN8, STRAP/UNRIP and the Sm proteins SNRPB, SNRPD1, SNRPD2, SNRPD3, SNRPE, SNRPF and SNRPG; catalyzes core snRNPs assembly. Forms a 6S pICln-Sm complex composed of CLNS1A/pICln, SNRPD1, SNRPD2, SNRPE, SNRPF and SNRPG; ring-like structure where CLNS1A/pICln mimics additional Sm proteins and which is unable to assemble into the core snRNP. Interacts (via C-terminus) with SMN1 (via Tudor domain); the interaction is direct. Post-translationally, methylated on arginine residues by PRMT5 and PRMT7; probable asymmetric dimethylation which is required for assembly and biogenesis of snRNPs.

It is found in the cytoplasm. It localises to the cytosol. Its subcellular location is the nucleus. Plays a role in pre-mRNA splicing as a core component of the spliceosomal U1, U2, U4 and U5 small nuclear ribonucleoproteins (snRNPs), the building blocks of the spliceosome. Component of both the pre-catalytic spliceosome B complex and activated spliceosome C complexes. As a component of the minor spliceosome, involved in the splicing of U12-type introns in pre-mRNAs. As part of the U7 snRNP it is involved in histone pre-mRNA 3'-end processing. The chain is Small nuclear ribonucleoprotein Sm D3 (SNRPD3) from Homo sapiens (Human).